The sequence spans 524 residues: Probable pectinesterase/pectinesterase inhibitor 19 (524 aa).

A signal peptide spans 1 to 22 (MLVKVFSFFILMITMVVIGVSK). Residues 23-172 (EYCDDKQSCQ…ISRARIALAL (150 aa)) are pectinesterase inhibitor 19. The pectinesterase 19 stretch occupies residues 215–510 (DVVVAKDGTG…FTVAKLLDGE (296 aa)). 2 N-linked (GlcNAc...) asparagine glycosylation sites follow: Asn-265 and Asn-281. Thr-290 contacts substrate. Asp-343 serves as the catalytic Proton donor; for pectinesterase activity. A disulfide bridge links Cys-357 with Cys-377. Catalysis depends on Asp-364, which acts as the Nucleophile; for pectinesterase activity. N-linked (GlcNAc...) asparagine glycosylation is present at Asn-412. 2 residues coordinate substrate: Arg-430 and Trp-432.

The protein in the N-terminal section; belongs to the PMEI family. It in the C-terminal section; belongs to the pectinesterase family. Expressed in siliques, but not in flower buds.

It is found in the secreted. The protein resides in the cell wall. The catalysed reaction is [(1-&gt;4)-alpha-D-galacturonosyl methyl ester](n) + n H2O = [(1-&gt;4)-alpha-D-galacturonosyl](n) + n methanol + n H(+). It participates in glycan metabolism; pectin degradation; 2-dehydro-3-deoxy-D-gluconate from pectin: step 1/5. Acts in the modification of cell walls via demethylesterification of cell wall pectin. This is Probable pectinesterase/pectinesterase inhibitor 19 (PME19) from Arabidopsis thaliana (Mouse-ear cress).